The primary structure comprises 173 residues: Gamma-crystallin S-2 (173 aa).

2 Beta/gamma crystallin 'Greek key' domains span residues 2-40 (GKII…RVES) and 41-83 (DWWV…RVPT). The interval 84–88 (HTQRP) is connecting peptide. Beta/gamma crystallin 'Greek key' domains are found at residues 89–129 (YRMR…HVMG) and 130–172 (AYWI…RRIM).

It belongs to the beta/gamma-crystallin family.

Functionally, crystallins are the dominant structural components of the vertebrate eye lens. The chain is Gamma-crystallin S-2 (GS-2) from Chiloscyllium indicum (Slender bamboo shark).